A 479-amino-acid polypeptide reads, in one-letter code: Aldehyde dehydrogenase family 3 member B2 (479 aa).

Active-site residues include glutamate 223 and cysteine 257. Cysteine 476 carries the cysteine methyl ester modification. Cysteine 476 carries the S-geranylgeranyl cysteine lipid modification. Positions 477–479 are cleaved as a propeptide — removed in mature form; the sequence is TLL.

This sequence belongs to the aldehyde dehydrogenase family. Geranylgeranylation is important for localization to lipid droplets and enzyme activity. As to expression, expressed in testis, white adipose tissue, lung, small intestine, kidney, spleen and liver.

It localises to the lipid droplet. The catalysed reaction is an aldehyde + NAD(+) + H2O = a carboxylate + NADH + 2 H(+). It catalyses the reaction a long-chain fatty aldehyde + NAD(+) + H2O = a long-chain fatty acid + NADH + 2 H(+). It carries out the reaction a medium-chain fatty aldehyde + NAD(+) + H2O = a medium-chain fatty acid + NADH + 2 H(+). The enzyme catalyses hexadecanoate + NADH + 2 H(+) = hexadecanal + NAD(+) + H2O. The catalysed reaction is octanal + NAD(+) + H2O = octanoate + NADH + 2 H(+). It functions in the pathway alcohol metabolism; ethanol degradation; acetate from ethanol: step 2/2. In terms of biological role, oxidizes medium and long chain fatty aldehydes in lipid droplets into non-toxic fatty acids. This Mus musculus (Mouse) protein is Aldehyde dehydrogenase family 3 member B2.